A 6857-amino-acid chain; its full sequence is MSTSSSILDIPSKMFRILKNNTRETEQHLSSSTLDLISKSQLLAQCFDTQEIMASLSKTVRSILESQNLEHKSTLTPYNSSQSLQLLVMNTSCTQFKWTTGSTSSVKALLEKELCRGLVPLNDITPKSNYVELSLLTPSILIGNETSTTTTLPEIPLDMEQSIISCVENTLLKEVQALSGQESCQEYFLSANYQSLIPPQVLLNLMKMSSVVDLSPLTLPNTRLWLKLSPFHGGTSVSYATQIKGYANCARREEKCLKNRLTKKQKNQEKGSFDARSVITLGGKMYRYKVVVLRCEDQSDNLSELQFEPQVEYTMDMVPHCWKELVKKRLIRAKGTWDLSCVEDLDLDHVEVRGDSLLHRSSVVHDLTSIVDDTLQEKLFSRTWLRQSLKYSGNILQRLSSLFATEGLKKITLVNSDITPVQVGDKWLNFVDFGKSTVFFVKTLNNIHLAMTRQRESCNYIHEKFGRVRWLGAKPEQGAIVKVFAWCLNKKEFKFRDNQLKQYVCRQGVIKHEPCEYLNVEVLDEFVALNNDLNCVQKIKTYLAAYFGLKKVKLTQKNFMTPLITKKQELVFQPCNCPNHQFYVAQFDKHVTLGLGRKDGILFAEQVPSYAIILAVGFGTVETQLVTHYYSEMRRVYHPLDFQSNTFVFDHQGVMLEDISPADYNDVGEEDYQLEYSGGFDQPFQNYHSDDEDQAFPDFEDERHPDEENWARPIISSGESSVVSSRPSSPLVYSSLVPVASPFGYMNGIRVFDICLADDLDFLQIHGQCPCARCKGLYFYQPIRPRGFTIFENVVEFFSFVEKCEVFEEIGPFFKMIEYSMLYNEYNIFYGLGKKIYQSDLVLPVKHLDQLWKRAQLDIDVVSEFENFKNSLQNINNVVYIAPYFNDQGEWNDIFDGYEFNLNDNQFWFQAKPVYDLVCYIYQGFFSDSRPLEKLYQKLCLDYHTSAMLHTQTHLKYCYVALLHSERAFQMSINLDSLDNEQLHFLATMGMGDASLVGPTYLSEYHSNFNWYSIMSKACHYVKLEQLVGLTYQEKRLMILSRVQEFYEQQHRGPIQLILSPLKVVNLPPITCTEGYCYQPVTRLFDTCVMPDIMKKLSRKRTSVSDVFGILADYFKRTLSYRCFKVHEFCGIERQQEFSDMTTLKLVTDWCQDTYYFYNEYATMTDVEPKVQVSSDYYLKIPSEVVEHIRQFLPHNVNVGLMNYVSSNCDFDQCKFEFCLSGKGYVLGNMFFNRCAIQYVKTNLFIVLFKSRPLLYITQESIYLSDFNVLQAQCLTGEFCLDFEPVQGKTLFGVYFTNGQRYGQQWETLPRFSLKPLNSPRKRVPTQPFEELAEVCIFKQKLKLTQLHNDCSVTPRVCSIPQTITATFQPYYCLENFYGVKAPKVIVSGHLATHYVKLTHKISKCVLVTKLAVARAFYFTPTSMGSHYHLDPMEGISFGKRATVQFEPVGLIKDVNLLVYQFGSHVSIQFFPEAPCIVADGHYPSKYSGVWLGYLPSVEECKIAQVNHRVYVPTILRTSKSAPFHIIQNGDMGRGPITVTYHYAKNFDNKSLTPMFKMFQQVFEKSKDDIFKAFNTMSLEQKKVLSHFCGEFDEAYTLQTMSDEISFESSAYPDVVACSLAYILGYEMCLTVKVNAKNEKLDIGSQCERVFVDYDVKKNEWTLSPEEGEDSDDNLDLPFEQYYEFKIGQTNVVLVQDDFKSVFEFLKSEQGVDYVVNPANSQLKHGGGIAKVISCMCGPKLQAWSNNYITKNKTVPVTKAIKSPGFQLGKKVNIIHAVGPRVSDGDVFQKLDQAWRSVFDLCEDQHTILTSMLSTGIFGCTVNDSFNTFLSNVARLDKSLVVFVVTNMVEQYNQAFAVIKMYQQYHGLPNFGNTCWFNALYQLLKSFSEKEQCVNDLLNCFDDFYDCPTSQCVEWVCEQLGVQFGQQQDAVEMLMKVFDVFKCDVRVGFDCLSRLQQVNCGFCVEVPAQAVLMFSGKDQCGHWTAARKIVDKWYTFDDNHVVQKDPVWQNVVLVLRDRGIFRSADFERKPARRRRVSHRVPRDTLSQDAITYIEDLRFSSGTCLSRYFVESVESFVSGDNVSEVSDEQTCVEVAIEESDGHVEQICQSSVDCVGMPESFQFTFSMPLQTFVQECDQKCEDDFSQEHVECDQQFEPVEQVGQGGQQDGQVDQQIKESEQVVEPSAPSGQESPQALLQQVVDEVVYQIEQVKCDQKQDQDSVQCDEIEEINSRGEQTVQQQLQPILGHDLNENEGPTLSVGAGKLVRCRSLAVTESNLSTSNTIFVWSEVLTHQYIGFKTDLMGLTYNIKFKLICYVLFLWFGVLCCTSHNTPFYMRLCIYLVLLWLSLMIWNASQINVKTGWNELYVLKLLTSIKLPNIVKFRCELVQWFVLKCLFVSFYVYDYVVKVCVSIFQMPQLRPFTWPFIKLGFVDTFLSHHILAFPEKVANQSTLPTCGDKRYYVYVPSWCRASFTSLVMRARELTSTGRSKTLDNWHYQCCSKTAKPLSCFNVREFVFDQDCKHEAYGFLSSLCVYLLFYSGFLTFWLPLFCYYYVLFMCTFKNLPVDITKPIKWTVLQQVVNDVLSLVTKPLFGRPVCPPLTTYLTSTTADEAVKVSRSLLGRFCTPLGFQQPVMNVENGVTVSNFGFFNPLMWPLFVVVLLDNRFIWFFNVLSYVMMPVFVIILFYFYLKKICGCINFKGLSKCCTKHFNQFSKPLVAAGVHGNRTNFTYQPMQEHWCDRHSWYCPKEEHYMTPDMAVYIKNYYNLACAPTADLVWCDYTKSAPTMTWSNFKYSSYKAKETVLCAPSSHADSMLMAWYALLHNVRFTVNPNVVDLPPAVNTIYVSSDSEDSVQDKSQPDVKLRPKKPKGNFKKQSVAYFSREPVDIWYYTTLVIVMGVLFMFMYSCLMVGQYVVMPRDKFFGVNPTGYSYVNAPPYLHAAPPVLQNSDGMILATQLKVPSITYSVYRLLSGHLYFTKLIVSDNECTPPFGAARLSNEFSCNGFTYVLPAHLRFFNRYVMLIHPDQLHMLPFEVEYGSHTRVCYTTGSNSVECLPTFEIISPYVFVFIVVIFTVIFLILIRLYIVMYSYFKVFTYVVFKLLFVNIIMVLFVVCLPPLVPGVVFVLALWLCDSVMFLLYLAFLSLFILPWFYVLFFLFMVGGFVFWWMMRSADVVHLTTDGLTFNGTFEQISKCVFPLNPLIVNRMLLDCQMSHSDLVEKSKLKTTEGKLANEMMKVFMTGETSYYQPSNFSFQSVFSKATSPFTLHARPPMPMFKLYVHFTGSCVGSTSTGTGFAIDDNTIVTAKHLFEYDDLKPTHVSVEIVTRSHSARSASIIWKEPDVKGWTFKGENAYIQVENLKDFYIEDFKYLPFQQIEKDFYKRMEPVTIYSVKYGSEFATQAWQTVNGHFVCYNTEGGDSGAPLVCNGRIVGVHQGLCDNFKTTLASDFEGKMMTEVKGHHVDPPVYYKPIIISAAYNKFVAGEDSSVGDGKNYHKFENEDFACMCKELESVTFGDQLRRYCYNLPQFLEPLQYFHVPSFWQPFKKQSVSNNVSWVVEHLHFIFSIYFLICDFVAYWWLDDPFSVVLPLFFIVQLLSTVFLKNVLFWTTSYLITLAVTFYIHSEVAESMFLLGFLSDRVVNRMSLIIVVAIMCLFVVVRVVVNVKRAIFVFVVSVVLIFVHICLGIVQFNSFVNVVLFDVYAVFTALLTPQPVVAIIMLLLFDTKMLMSFAFIVIVLSFRVFKDYKFVKVLHNFCNFDFVLSQVSLFRYRHRNQGNDPTHYEALWLFLKELYYGIQDAKYEVFSPQAGSYNVKFLTDMTEQDQLEAVEQVQRRLQRFNIVQDKASPRLVLYSKTIEFIKDQIQQQRAVGANPFIITTLTSNDIGLDNVEVHNPANFKPEDLQAHMWFFSKSPVFIGQVPIPTNVQTAAVLDTTYNCQDLTADEKNNVAATLQIQNAAITLSLFEKCTQFLESELGEVPTLMWQAEDVADIKHLESQIENLRKVLDGMQFGTTEYKATRKQLNICQSQLDQAKAFERKLAKFLEKVDQQQAITNETAKQLSAFKNLVKQVYESYMSSLKVKVLEANDASCLLTSTDLPRKLVLMRPITGVDGIKIVEKANGCEITAFGTTFNTGHGSNLAGLAYSTTQPLSAYPFIFNLEGIFKQQANIGYKTVECNMSSHNGSVLYKGKVVAVPSDDNPDFVVCGKGYKLDCGINVLMIPSIVRYITLNLTDHLQKQSLKPRRRLQYRQQGVRLGGVNLGEHQAFSNELISTVGYTTWVSSTVCRDNTHKHPWFVQIPVNEKDPEWFMHNTQLKDNQWVVDLKPTHWLVNADTGEQLFALSLTDEQALKAEAILQKWSPITQDVECWFKDLKGYYTVSGFQPLWPVCPVNICNVRLDPVFKPQSIVYADDPTHFLSLPVVNKNFLAAFYDLQEGFPGKKQVAPHISLTMLKLSDEDIEKVEDILDEMVLPNSWVTITNPHMMGKHYVCDVEGLDSLHDEVVSVLREHGIACDQKRLWKPHLTIGELNDVSFDKFKDFAISCKLEDCDFVKLGAPKANARYEFITTLPLGDFKLLRGAWSACRHLCFQNGAYQSSRSKHYIDLATEYNAGIVKVNKSNTHSVEYQSKRFMIKRVKDQSEFALAKTAFLPSIIPHHMEKQNGEWFLIRGPTSQWSLGDLVYAIWLGDQDYLSECGFVFNPSRDEFLDDANQRSFLANLLEPAILNFSHIYWQVKMCKVPYKLTLDNVDLNGQLYDFGDYPCPNSVDNQSALFVLAEVWSMTRRPFPVAFARLLANEMEIPTDYQMFFQNILLSGSYLDKALCLNNVRPFLSDPANLTTTPFFSQHNGVWTHFYNPIYGLVECNLDEFAELPEVLQQLVTVQGPITNNMTPAISVGEGVYAANVPSASATKQKIPFYDVGLCQELTDAGVDCGEAFKYFYYLSNPAGALADVCYYDYQGTGFYSPKLLAGVYDFMKRVTECYRINERFTYEQAKPRKSSMGINITGYQQDAVYRALGPENIARLFEYAQKAPLPFCTKIITKFALSAKARARTVSSCSFIASTIFRFAHKPVTSKMVEVAQNSGGFCLIGVSKYGLKFSKFLKDKYGAIEGFDVFGSDYTKCDRTFPLSFRALTAALLYELGEWDEKSWLYLNEVNSYMLDTMLCDGMLLNKPGGTSSGDATTAHSNTFYNYMVHYVVAFKTILSDLSEGNKVMRIAAHNAYTTGDYQVFNTLLEDQFQTNYFLNFLSDDSFIFSKPEALKIFTCENFSNKLQTILHTKVDQTKSWSTKGHIEEFCSAHIIKTDGEYHFLPSRGRLLASLLILDKLSDVDIYYMRFVAILCESAVYSRYQPEFFNGLFQVFLDKVQQFRKDYCCDPCPPQLLEREFYENLVFTSNSEVGIVDCYLENFKLQCEFKQQANFDKVCFCCPNPAVSVCEECYVPLPLCAYCYYVHVVISNHSKVEDKFKCFCGQDNIRELYIVLNNSICMYQCKNCVESDRLRISLLSDVDQIVRLPGFKSNSASIAKNGVAQLLTSVDNVDVSLDWNYQESVQQNVARIVYHSANMTQMSIEVVYVSFTLVRNDGSSAILDIPNFKCPDTSYCLFYKPGKSGVLKFTGKGTLTSCYDNKNLTWFKVTCPDFNQPWRLATCFVIQQHDVVYPPIKATQYENVTFVMGPPGTGKTTFVYDTYLSKASSSNRFVYCAPTHRLVGDMDEKVDGAVVVSAYNDRTYRNPVWNKDDSYGVLLCTHNTLPFIKSAVLIADEVSLIPPHVMIKILSMGFKKVVLLGDPFQLSPVYKNHKVHFKYDTFYLLQLATQKRYLTACYRCPPQILSAFSKPYCDVGVDLVSFNNKPGKFDIIVSKQLANIQDFSVLSVLSKEYPGYVILVNYRAAVDYAMQNGLGDVTTIDSSQGTTAANHLLVLFGASNFSKTVNRVIVGCSRSTTHLVVVCCPELFKHFQPILNWPEPKYRYFGMEKQSDFNIIPEVSSLVFCDIEFWHYKADPNSKTRTVYPGQIAVVTSQTLQLYLGVFDDTGYKSALRGLPKDVYVPPNWVWMRKHYPSYEQHAYNMQRLFKFIIDTTFGQPWFILYSCSNDLKSLKFYVEFDTCYFCSCGEMAICLMRDGNYKCRNCYGGMLISKLVNCKYLDVQKERVKLQDAHDAICQQFHGDSHEALCDAVMTKCLYLASYEAAFKDTIHVKYKDLCLEIQYKITSSFVRYDSVHKRYLYRDHGAMYYFRTPRSPMQNVYKYEVGSHAEYSINICTSYEGCQSFGKTCTKCIHIHCIVEQFMADERFKEFILVSVVKSDYVEQALSPAAKALMLTVTKVEDKSFYISNGVRYDLYDYDLSKSVMRVVNSNVKPLPLYSVIVGLGINCTVGCVLPNVPMKLKDELLITDVPLSTLRLDLQTWYYISWPTLSNKNSRWKLAGAQVYDCSVHIYIEATGEQPLYYLQQGKGESLFELPDTLFSTGRLYNLDHDAAQNFNVKQLAIETMPNNHHVFSGDFTEVGTDIGGVHHVVALNGYKGSIIPNYVKPIATGLINVGRAVKRTTLVDVCANQLYEKVKQQLEGVKVSKVIFVNIDFQDVQFMVFANGEDDIQTFYPQKDFVRSYYEWPNILPQIESHYDLKNYGQNPTFMPQPVNFAKYTQICTFIQDHVKVARNALVWHLGAAGVDGCSPGDIVLSSFFKECLVYSWDIKDYSTLLDKHSYDCNFRPNLIVSDIYNVSSNVSEVLDDCVHRLALGGTIVFKTTESSRPDIQLSQFTKYFSAVQFFTAGVNTSSSEVFVVLKYKLYSEPIGEELCSPNILSRIAAYRNKLCIVPNFKVFSTSFSYKYSGVKFVQKCFYVSVPRQFCASGLIQEVPMLCQMEH.

Residues 1679-1860 (FEQYYEFKIG…QYNQAFAVIK (182 aa)) form the Macro domain. A disordered region spans residues 2158-2191 (QVGQGGQQDGQVDQQIKESEQVVEPSAPSGQESP). 10 helical membrane passes run 2303 to 2323 (LTYN…FGVL), 2330 to 2350 (TPFY…LMIW), 2385 to 2405 (LVQW…DYVV), 2535 to 2555 (LFYS…YVLF), 2639 to 2659 (VTVS…VVVL), 2664 to 2684 (FIWF…IILF), 2889 to 2909 (TTLV…LMVG), 3057 to 3077 (IISP…FLIL), 3106 to 3126 (VLFV…LALW), and 3142 to 3162 (LFIL…GFVF). An HD1 region spans residues 2303–2683 (LTYNIKFKLI…VMMPVFVIIL (381 aa)). An HD2 region spans residues 2889–3162 (TTLVIVMGVL…FLFMVGGFVF (274 aa)). Catalysis depends on charge relay system; for 3C-like serine proteinase activity residues histidine 3304, glutamate 3347, and serine 3416. Residues 3555-3738 (HLHFIFSIYF…IVIVLSFRVF (184 aa)) form an HD3 region. Transmembrane regions (helical) follow at residues 3556–3575 (LHFI…YWWL), 3580–3602 (SVVL…NVLF), 3611–3631 (LAVT…LGFL), 3640–3660 (SLII…VVNV), 3663–3683 (AIFV…LGIV), 3698–3718 (AVFT…LLLF), and 3723–3738 (LMSF…FRVF). In terms of domain architecture, NiRAN spans 4566–4797 (DFKLLRGAWS…ANEMEIPTDY (232 aa)). Residues 5105-5256 (FDVFGSDYTK…FSKPEALKIF (152 aa)) form the RdRp catalytic domain. The CV ZBD domain maps to 5413–5528 (FDKVCFCCPN…NGVAQLLTSV (116 aa)). The Zn(2+) site is built by cysteine 5417, cysteine 5420, cysteine 5428, cysteine 5431, cysteine 5438, cysteine 5441, histidine 5445, histidine 5451, cysteine 5460, cysteine 5462, cysteine 5483, and cysteine 5486. In terms of domain architecture, (+)RNA virus helicase ATP-binding spans 5633–5812 (NQPWRLATCF…LQLATQKRYL (180 aa)). Residues 5813-5972 (TACYRCPPQI…FGMEKQSDFN (160 aa)) enclose the (+)RNA virus helicase C-terminal domain. The region spanning 5970–6183 (DFNIIPEVSS…YLASYEAAFK (214 aa)) is the ExoN domain. Catalysis depends on residues aspartate 5984, glutamate 5986, and aspartate 6085. Residues histidine 6149, cysteine 6153, and histidine 6157 each contribute to the Zn(2+) site. Active-site residues include histidine 6161 and aspartate 6166. Position 6172 (cysteine 6172) interacts with Zn(2+). Positions 6451-6591 (LPDTLFSTGR…GEDDIQTFYP (141 aa)) constitute a NendoU domain. Active-site residues include histidine 6487, histidine 6504, lysine 6536, lysine 6633, aspartate 6709, lysine 6737, and glutamate 6771. Positions 6593-6857 (KDFVRSYYEW…EVPMLCQMEH (265 aa)) constitute a Nidovirus-type SAM-dependent 2'-O-MTase domain.

In terms of processing, specific enzymatic cleavages in vivo by its own protease yield mature proteins. 3CL-PRO is autocatalytically processed.

It is found in the host membrane. The catalysed reaction is RNA(n) + a ribonucleoside 5'-triphosphate = RNA(n+1) + diphosphate. The enzyme catalyses ATP + H2O = ADP + phosphate + H(+). The 3C-like serine proteinase is responsible for the majority of cleavages. In terms of biological role, the helicase which contains a zinc finger structure displays RNA and DNA duplex-unwinding activities with 5' to 3' polarity. Its function is as follows. Acts on both ssRNA and dsRNA in a 3' to 5' direction. Functionally, nendoU is a Mn(2+)-dependent, uridylate-specific enzyme, which leaves 2'-3'-cyclic phosphates 5' to the cleaved bond. This is Replicase polyprotein 1ab (rep) from Equus caballus (Horse).